The primary structure comprises 196 residues: Probable phosphoheptose isomerase (196 aa).

One can recognise an SIS domain in the interval 43-196 (IVNVFNSGGK…MICSVIDSYY (154 aa)). 58-60 (NGG) contributes to the substrate binding site. Residues histidine 67 and glutamate 71 each coordinate Zn(2+). Substrate contacts are provided by residues glutamate 71, 100–101 (ND), 126–128 (STS), serine 131, and glutamine 178. Residues glutamine 178 and histidine 186 each contribute to the Zn(2+) site.

Belongs to the SIS family. GmhA subfamily. Requires Zn(2+) as cofactor.

It localises to the cytoplasm. It carries out the reaction 2 D-sedoheptulose 7-phosphate = D-glycero-alpha-D-manno-heptose 7-phosphate + D-glycero-beta-D-manno-heptose 7-phosphate. The protein operates within carbohydrate biosynthesis; D-glycero-D-manno-heptose 7-phosphate biosynthesis; D-glycero-alpha-D-manno-heptose 7-phosphate and D-glycero-beta-D-manno-heptose 7-phosphate from sedoheptulose 7-phosphate: step 1/1. Its function is as follows. Catalyzes the isomerization of sedoheptulose 7-phosphate in D-glycero-D-manno-heptose 7-phosphate. The sequence is that of Probable phosphoheptose isomerase from Thermoplasma volcanium (strain ATCC 51530 / DSM 4299 / JCM 9571 / NBRC 15438 / GSS1).